The chain runs to 471 residues: MPN domain-containing protein (471 aa).

A compositionally biased stretch (low complexity) spans 1–10 (MAAPEPLSPA). Residues 1–63 (MAAPEPLSPA…GGGGAGAGGC (63 aa)) form a disordered region. An N-acetylalanine modification is found at A2. Phosphoserine is present on S8. The segment covering 16 to 29 (EAPEEDEDEAEAED) has biased composition (acidic residues). Gly residues predominate over residues 36–63 (GAGGGRSGGGGSSVSGGGGGGGAGAGGC). Residues 71-166 (TRRAVTLRVL…KYKATWLRLH (96 aa)) enclose the RAMA domain. Residues S123, S125, and W145 each coordinate DNA. A disordered region spans residues 170–229 (TPATAADESPASEGEEEELLMEEEEEDVLAGVSAEDKSRRPLGKSPSEPAHPEATTPGKR). S178 and S181 each carry phosphoserine. Residues 182–197 (EGEEEELLMEEEEEDV) are compositionally biased toward acidic residues. In terms of domain architecture, MPN spans 272-407 (VAVSSNVLFL…PESKISPFWV (136 aa)). Zn(2+)-binding residues include H349, H351, and D362. The short motif at 349-362 (HSHPHSPALPSLQD) is the JAMM motif element.

This sequence belongs to the peptidase M67 family. Monomer. Mainly monomoric, but when binds to dsDNA, forms homotetramer assembled into two homodimers. May interact with histones; this interaction is facilitated by dsDNA binding. Post-translationally, degraded following binding to N(6)-methyladenosine methylated DNA (m6A).

Probable protease. Acts as a sensor of N(6)-methyladenosine methylation on DNA (m6A): recognizes and binds m6A DNA, leading to its degradation. Binds only double strand DNA (dsDNA) in a sequence-independent manner. This is MPN domain-containing protein from Homo sapiens (Human).